A 399-amino-acid chain; its full sequence is MKENIDKLLSNIAIMEPPLGLQDKLALARQENRKLTIKLGFDPTAPDLHLGHAVVLQKLKDFQDEGHRIVVIIGDFTAGIGDPTGRNKLRPPLTPEQINKNSQTYINQLAKVINIENIEIRKNSEWFNNMPFSNVIKLISKITLAQIMHRDDFKTRFESKAPVHLHEIIYPILQGYDSVMIDADIELGGTDQLFNNLVGRTLQEAYEKKGQIVITMPLLEGLDGIEKMSKSKNNYIGLTDNANDMYGKVMSIPDSVIINYLTLATDMEAEKQSAIVSQLELGLNPMKIKKDIAYNIVKRYHDDISAKEATEHFERVVQKRTPEEADHDVLILPKGSYITLLDLCSVALPAISRSELRRLIRSGAVRVDKSKEDDEIKNIEVIPGTLIWIGKRYKFRIGS.

A 'HIGH' region motif is present at residues 43-52; the sequence is PTAPDLHLGH. The 'KMSKS' region motif lies at 227 to 231; that stretch reads KMSKS. Lysine 230 serves as a coordination point for ATP. The S4 RNA-binding domain maps to 338–398; sequence ITLLDLCSVA…IGKRYKFRIG (61 aa).

Belongs to the class-I aminoacyl-tRNA synthetase family. TyrS type 2 subfamily. Homodimer.

The protein localises to the cytoplasm. It carries out the reaction tRNA(Tyr) + L-tyrosine + ATP = L-tyrosyl-tRNA(Tyr) + AMP + diphosphate + H(+). Catalyzes the attachment of tyrosine to tRNA(Tyr) in a two-step reaction: tyrosine is first activated by ATP to form Tyr-AMP and then transferred to the acceptor end of tRNA(Tyr). The protein is Tyrosine--tRNA ligase 2 of Photorhabdus laumondii subsp. laumondii (strain DSM 15139 / CIP 105565 / TT01) (Photorhabdus luminescens subsp. laumondii).